The sequence spans 430 residues: PCI domain-containing protein 2 homolog (430 aa).

The PCI domain maps to 243–424 (ITYRFFNGRL…ALVVSPTNPF (182 aa)).

It belongs to the CSN12 family.

This is PCI domain-containing protein 2 homolog (pcid2) from Dictyostelium discoideum (Social amoeba).